We begin with the raw amino-acid sequence, 68 residues long: YPQQPQPFPQQPIPQQPQPYPQQPQPFSQQPIPQQPQPYPQQPQPFPQQPIPLQPHQPYTQQTIWSMV.

2 stretches are compositionally biased toward pro residues: residues 1-24 (YPQQ…PQQP) and 33-55 (PQQP…PLQP). The segment at 1 to 68 (YPQQPQPFPQ…YTQQTIWSMV (68 aa)) is disordered. The span at 59-68 (YTQQTIWSMV) shows a compositional bias: polar residues.

In terms of tissue distribution, developing endosperm.

Functionally, sulfur-poor seed storage protein. This chain is C-hordein, found in Hordeum vulgare (Barley).